The chain runs to 439 residues: Transcription factor pydF (439 aa).

Over residues 1 to 18 (MGRPQRADKQRRETDGPQ) the composition is skewed to basic and acidic residues. 3 disordered regions span residues 1–53 (MGRP…GYAR), 143–177 (HVEK…QAVE), and 239–262 (AFRD…MQQH). Residues 20-35 (SRPSLTQAQKNSTTIR) are compositionally biased toward polar residues. Over residues 143-153 (HVEKATAERPG) the composition is skewed to basic and acidic residues. The span at 157–172 (SSSPSSSLLRTSSSPS) shows a compositional bias: low complexity. Residues 243-260 (GQNNGTSRPNTAASQNMQ) are compositionally biased toward polar residues.

It is found in the nucleus. Its function is as follows. Transcription factor; part of the gene cluster that mediates the biosynthesis of pyrrocidines, fungal natural products containing a macrocyclic para-cyclophane connected to a decahydrofluorene ring system that show potent antibiotic activities toward Gram-negative bacteria. This chain is Transcription factor pydF, found in Acremonium sp.